Consider the following 250-residue polypeptide: 2,3-bisphosphoglycerate-dependent phosphoglycerate mutase (250 aa).

Residues 10 to 17 (RHGESQWN), 23 to 24 (TG), R62, 89 to 92 (ERHY), K100, 116 to 117 (RR), and 185 to 186 (GN) each bind substrate. H11 serves as the catalytic Tele-phosphohistidine intermediate. The active-site Proton donor/acceptor is E89.

This sequence belongs to the phosphoglycerate mutase family. BPG-dependent PGAM subfamily. Homodimer.

The catalysed reaction is (2R)-2-phosphoglycerate = (2R)-3-phosphoglycerate. The protein operates within carbohydrate degradation; glycolysis; pyruvate from D-glyceraldehyde 3-phosphate: step 3/5. Catalyzes the interconversion of 2-phosphoglycerate and 3-phosphoglycerate. The chain is 2,3-bisphosphoglycerate-dependent phosphoglycerate mutase from Salmonella paratyphi A (strain ATCC 9150 / SARB42).